Reading from the N-terminus, the 309-residue chain is ADP,ATP carrier protein 1 (309 aa).

Solcar repeat units lie at residues 11–104 (SHFG…IKSL), 116–208 (KWFA…FKPV), and 216–302 (GSFV…LQLI). Helical transmembrane passes span 13–40 (FGVD…VKLL), 81–105 (TANV…KSLL), 114–134 (YAKW…LSLL), 184–205 (FVPS…YDSF), and 219–239 (VASF…SYPL). The ADP site is built by Arg-86 and Lys-98. Residue Arg-243 coordinates ADP. The important for transport activity stretch occupies residues 243–248 (RRRMMM). The short motif at 243–248 (RRRMMM) is the Nucleotide carrier signature motif element. A helical membrane pass occupies residues 279–299 (CGANIFRGVAAAGVISLYDQL).

Belongs to the mitochondrial carrier (TC 2.A.29) family. Monomer.

Its subcellular location is the mitochondrion inner membrane. The enzyme catalyses ADP(in) + ATP(out) = ADP(out) + ATP(in). Its activity is regulated as follows. The matrix-open state (m-state) is inhibited by the membrane-permeable bongkrekic acid (BKA). The cytoplasmic-open state (c-state) is inhibited by the membrane-impermeable toxic inhibitor carboxyatractyloside (CATR). Its function is as follows. ADP:ATP antiporter that mediates import of ADP into the mitochondrial matrix for ATP synthesis, and export of ATP out to fuel the cell. Cycles between the cytoplasmic-open state (c-state) and the matrix-open state (m-state): operates by the alternating access mechanism with a single substrate-binding site intermittently exposed to either the cytosolic (c-state) or matrix (m-state) side of the inner mitochondrial membrane. The protein is ADP,ATP carrier protein 1 (AAC1) of Saccharomyces cerevisiae (strain ATCC 204508 / S288c) (Baker's yeast).